Consider the following 495-residue polypeptide: Chromosomal replication initiator protein DnaA (495 aa).

The interval 1-83 is domain I, interacts with DnaA modulators; that stretch reads MSVALWQQCL…KVQLTVGSRR (83 aa). Residues 83–158 are domain II; sequence RNVAMSSPRD…QVEGSLKHQS (76 aa). Residues 86 to 127 form a disordered region; the sequence is AMSSPRDLGAPVSATTMNASRPTEAPAVHAAPRAKGDYADEQ. The tract at residues 159 to 375 is domain III, AAA+ region; sequence GLNPNFTFET…GALKKVIADS (217 aa). 4 residues coordinate ATP: Gly-203, Gly-205, Lys-206, and Thr-207. The interval 376 to 495 is domain IV, binds dsDNA; it reads HFMGKPITQD…YKNLLRLLTS (120 aa).

This sequence belongs to the DnaA family. Oligomerizes as a right-handed, spiral filament on DNA at oriC.

The protein localises to the cytoplasm. Plays an essential role in the initiation and regulation of chromosomal replication. ATP-DnaA binds to the origin of replication (oriC) to initiate formation of the DNA replication initiation complex once per cell cycle. Binds the DnaA box (a 9 base pair repeat at the origin) and separates the double-stranded (ds)DNA. Forms a right-handed helical filament on oriC DNA; dsDNA binds to the exterior of the filament while single-stranded (ss)DNA is stabiized in the filament's interior. The ATP-DnaA-oriC complex binds and stabilizes one strand of the AT-rich DNA unwinding element (DUE), permitting loading of DNA polymerase. After initiation quickly degrades to an ADP-DnaA complex that is not apt for DNA replication. Binds acidic phospholipids. This chain is Chromosomal replication initiator protein DnaA, found in Chromohalobacter salexigens (strain ATCC BAA-138 / DSM 3043 / CIP 106854 / NCIMB 13768 / 1H11).